The following is a 376-amino-acid chain: Alcohol dehydrogenase 1 (376 aa).

An N-acetylserine modification is found at Ser2. Zn(2+) contacts are provided by Cys47, His68, Cys98, Cys101, Cys104, Cys112, and Cys176. NAD(+)-binding positions include 201–206 (GLGGVG), Asp225, Lys230, 294–296 (VGV), and Arg371.

The protein belongs to the zinc-containing alcohol dehydrogenase family. Class-I subfamily. As to quaternary structure, homodimer. It depends on Zn(2+) as a cofactor.

The protein localises to the cytoplasm. The enzyme catalyses a primary alcohol + NAD(+) = an aldehyde + NADH + H(+). It carries out the reaction a secondary alcohol + NAD(+) = a ketone + NADH + H(+). This is Alcohol dehydrogenase 1 (ADH1) from Gallus gallus (Chicken).